The sequence spans 395 residues: Elongation factor Tu (395 aa).

The tr-type G domain occupies 10 to 205 (KPHVNIGTIG…AVDSYIPMPE (196 aa)). Residues 19-26 (GHIDHGKT) are G1. Residue 19-26 (GHIDHGKT) participates in GTP binding. Threonine 26 serves as a coordination point for Mg(2+). The interval 61–65 (GITIA) is G2. The interval 82 to 85 (DCPG) is G3. Residues 82 to 86 (DCPGH) and 137 to 140 (NKVD) contribute to the GTP site. The G4 stretch occupies residues 137 to 140 (NKVD). Residues 175 to 177 (SAL) are G5.

This sequence belongs to the TRAFAC class translation factor GTPase superfamily. Classic translation factor GTPase family. EF-Tu/EF-1A subfamily. Monomer.

It localises to the cytoplasm. It catalyses the reaction GTP + H2O = GDP + phosphate + H(+). GTP hydrolase that promotes the GTP-dependent binding of aminoacyl-tRNA to the A-site of ribosomes during protein biosynthesis. In Solibacter usitatus (strain Ellin6076), this protein is Elongation factor Tu.